Here is a 59-residue protein sequence, read N- to C-terminus: Large ribosomal subunit protein bL32c (59 aa).

Basic residues predominate over residues 1–19; the sequence is MAVPKKRTSKAKKNARKAN. Residues 1-24 are disordered; the sequence is MAVPKKRTSKAKKNARKANWKNQA.

Belongs to the bacterial ribosomal protein bL32 family.

The protein resides in the plastid. It is found in the chloroplast. The sequence is that of Large ribosomal subunit protein bL32c (rpl32) from Porphyra purpurea (Red seaweed).